A 512-amino-acid chain; its full sequence is Glutathione-binding protein GsiB (512 aa).

The first 26 residues, Met1–Ala26, serve as a signal peptide directing secretion.

This sequence belongs to the bacterial solute-binding protein 5 family. In terms of assembly, the complex is composed of two ATP-binding proteins (GsiA), two transmembrane proteins (GsiC and GsiD) and a solute-binding protein (GsiB).

The protein localises to the periplasm. Its function is as follows. Part of the ABC transporter complex GsiABCD involved in glutathione import. Binds glutathione. In Shigella flexneri, this protein is Glutathione-binding protein GsiB.